A 34-amino-acid chain; its full sequence is Thermomycolin (34 aa).

Serine 33 serves as the catalytic Charge relay system.

This sequence belongs to the peptidase S8 family.

Its subcellular location is the secreted. The enzyme catalyses Rather non-specific hydrolysis of proteins. Preferential cleavage: -Ala-|-Xaa-, -Tyr-|-Xaa-, -Phe-|-Xaa- in small molecular substrates.. In terms of biological role, this is an extracellular proteinase with a general specificity for apolar residues. The chain is Thermomycolin from Malbranchea cinnamomea (Thermophilic fungus).